The sequence spans 1909 residues: DENN domain-containing protein 4C (1909 aa).

The MABP domain occupies 40 to 199; sequence KAPITDIAII…SVFLCYKKSV (160 aa). The uDENN domain occupies 191–364; it reads VFLCYKKSVP…NIPFPSPQRP (174 aa). Residues 385-521 form the cDENN domain; the sequence is PLPLSGANFS…PCKNLLSTLK (137 aa). In terms of domain architecture, dDENN spans 523 to 641; it reads LYPQLSSVHQ…CSFVSDKDTG (119 aa). A phosphoserine mark is found at S703, S737, and S741. The stretch at 821 to 855 is one PPR repeat; it reads VCYRVVMQLCGLWGHPVLAVRVLFEMKTARIKPNA. Residues E953, S965, S968, and S973 each carry the phosphoserine modification. T975 carries the post-translational modification Phosphothreonine. 12 positions are modified to phosphoserine: S989, S996, S1003, S1046, S1061, S1099, S1126, S1184, S1225, S1244, S1252, and S1278. Disordered regions lie at residues 1243-1263 and 1277-1338; these read KSPL…NRES and SSLP…HGSL. Residues 1296–1316 show a composition bias toward polar residues; that stretch reads SSPAVSRSKTFTGRFKQQTPS. 3 positions are modified to phosphoserine: S1325, S1337, and S1346. Residues 1419 to 1474 form a disordered region; the sequence is SGLVPSELTQSNTSLGSSSSSGDVGKLHYPTGEVPFPRGMKGQDFEKSDHGSSQNT. The span at 1426 to 1440 shows a compositional bias: low complexity; sequence LTQSNTSLGSSSSSG. Positions 1459–1468 are enriched in basic and acidic residues; sequence KGQDFEKSDH. Residues S1623, S1627, S1629, S1640, and S1799 each carry the phosphoserine modification.

In terms of processing, phosphorylated in response to insulin.

The protein resides in the cytoplasmic vesicle membrane. Its subcellular location is the cell membrane. It localises to the cytoplasm. The protein localises to the cytosol. Its function is as follows. Guanine nucleotide exchange factor (GEF) activating RAB10. Promotes the exchange of GDP to GTP, converting inactive GDP-bound RAB10 into its active GTP-bound form. Thereby, stimulates SLC2A4/GLUT4 glucose transporter-enriched vesicles delivery to the plasma membrane in response to insulin. This is DENN domain-containing protein 4C (DENND4C) from Homo sapiens (Human).